Here is a 448-residue protein sequence, read N- to C-terminus: Elongation factor 1-alpha (448 aa).

The tr-type G domain maps to 5 to 230; that stretch reads KIHISIVVIG…DQINEPKRPS (226 aa). A G1 region spans residues 14–21; the sequence is GHVDSGKS. A GTP-binding site is contributed by 14 to 21; it reads GHVDSGKS. Lys-55 carries the post-translational modification N6,N6-dimethyllysine. A G2 region spans residues 70–74; the sequence is GITID. An N6,N6,N6-trimethyllysine modification is found at Lys-79. Residues 91 to 94 form a G3 region; the sequence is DAPG. GTP-binding positions include 91–95 and 153–156; these read DAPGH and NKMD. The tract at residues 153 to 156 is G4; the sequence is NKMD. Lys-187 is subject to N6,N6,N6-trimethyllysine. The G5 stretch occupies residues 194-196; the sequence is SGF. Lys-261 carries the post-translational modification N6-methyllysine. Residue Glu-289 is modified to 5-glutamyl glycerylphosphorylethanolamine. Lys-306 carries the N6,N6,N6-trimethyllysine modification. Glu-362 bears the 5-glutamyl glycerylphosphorylethanolamine mark. The residue at position 396 (Lys-396) is an N6,N6,N6-trimethyllysine.

Belongs to the TRAFAC class translation factor GTPase superfamily. Classic translation factor GTPase family. EF-Tu/EF-1A subfamily.

It localises to the cytoplasm. This protein promotes the GTP-dependent binding of aminoacyl-tRNA to the A-site of ribosomes during protein biosynthesis. This Solanum lycopersicum (Tomato) protein is Elongation factor 1-alpha.